The sequence spans 413 residues: Serine hydroxymethyltransferase (413 aa).

(6S)-5,6,7,8-tetrahydrofolate is bound by residues Leu-119 and 123–125 (GHL). At Lys-228 the chain carries N6-(pyridoxal phosphate)lysine.

The protein belongs to the SHMT family. Homodimer. Requires pyridoxal 5'-phosphate as cofactor.

The protein localises to the cytoplasm. The catalysed reaction is (6R)-5,10-methylene-5,6,7,8-tetrahydrofolate + glycine + H2O = (6S)-5,6,7,8-tetrahydrofolate + L-serine. Its pathway is one-carbon metabolism; tetrahydrofolate interconversion. It participates in amino-acid biosynthesis; glycine biosynthesis; glycine from L-serine: step 1/1. In terms of biological role, catalyzes the reversible interconversion of serine and glycine with tetrahydrofolate (THF) serving as the one-carbon carrier. This reaction serves as the major source of one-carbon groups required for the biosynthesis of purines, thymidylate, methionine, and other important biomolecules. Also exhibits THF-independent aldolase activity toward beta-hydroxyamino acids, producing glycine and aldehydes, via a retro-aldol mechanism. In Desulfatibacillum aliphaticivorans, this protein is Serine hydroxymethyltransferase.